Here is a 503-residue protein sequence, read N- to C-terminus: SH2 domain-containing adapter protein B (503 aa).

Disordered stretches follow at residues 1 to 49 (MAKW…QACS) and 61 to 81 (CFSA…DLIR). Ser-101 carries the post-translational modification Phosphoserine. Low complexity predominate over residues 147–157 (AAASSSSSSGS). Positions 147–180 (AAASSSSSSGSPHLYRSSSERRPTTPAEVRYISP) are disordered. Residue Lys-186 forms a Glycyl lysine isopeptide (Lys-Gly) (interchain with G-Cter in SUMO2) linkage. Disordered stretches follow at residues 225 to 262 (ETGA…SAGY), 292 to 333 (DTPY…YDQP), and 345 to 381 (AAQF…IKHG). Over residues 244–256 (FDAKSDLKSKAGK) the composition is skewed to basic and acidic residues. 2 positions are modified to phosphoserine: Ser-301 and Ser-311. Residues 301–311 (SVDSDSESTVS) are compositionally biased toward polar residues. Residues 313–328 (RLRESKLPQDDDRPAD) show a composition bias toward basic and acidic residues. Ser-382 carries the post-translational modification Phosphoserine. Positions 404-498 (WYHGAISRSD…AEHLSLLYPV (95 aa)) constitute an SH2 domain.

Interacts with phosphorylated 'Tyr-720' of the ligand-activated receptor PDGFRA via its SH2 domain. Interacts with the ligand-activated receptors PDGFRB, FGFR1, KDR/VEGFR2, IL2RB and IL2RG. Interacts with EPS8 and V-SRC. Interacts with GRB2 and GRAP. Interacts with CD3Z. Interacts with tyrosine-phosphorylated LAT upon T-cell antigen receptor activation. Interacts with PLCG1. Interacts with ZAP70, LCP2/SLP-76, VAV1 and GRAP2. Interacts with JAK1 and JAK3. Interacts with PTK2/FAK1. Interacts with CRK/CrKII. Interacts with IRS2. Interacts with PTPN11. Post-translationally, phosphorylated upon PDGFRA, PDGFRB, TCR, IL2 receptor, FGFR1 or VEGFR2 activation. In terms of tissue distribution, expressed in heart, liver, brain and kidney (at protein level).

Its subcellular location is the cytoplasm. The protein localises to the cell membrane. Adapter protein which regulates several signal transduction cascades by linking activated receptors to downstream signaling components. May play a role in angiogenesis by regulating FGFR1, VEGFR2 and PDGFR signaling. May also play a role in T-cell antigen receptor/TCR signaling, interleukin-2 signaling, apoptosis and neuronal cells differentiation by mediating basic-FGF and NGF-induced signaling cascades. May also regulate IRS1 and IRS2 signaling in insulin-producing cells. The chain is SH2 domain-containing adapter protein B (Shb) from Mus musculus (Mouse).